The primary structure comprises 350 residues: Fe(3+) ions import ATP-binding protein FbpC (350 aa).

Positions L4 to L236 constitute an ABC transporter domain. G36–T43 serves as a coordination point for ATP.

Belongs to the ABC transporter superfamily. Fe(3+) ion importer (TC 3.A.1.10) family. As to quaternary structure, the complex is composed of two ATP-binding proteins (FbpC), two transmembrane proteins (FbpB) and a solute-binding protein (FbpA).

It localises to the cell inner membrane. It catalyses the reaction Fe(3+)(out) + ATP + H2O = Fe(3+)(in) + ADP + phosphate + H(+). In terms of biological role, part of the ABC transporter complex FbpABC involved in Fe(3+) ions import. Responsible for energy coupling to the transport system. The polypeptide is Fe(3+) ions import ATP-binding protein FbpC (Pseudomonas fluorescens (strain Pf0-1)).